The primary structure comprises 105 residues: NADH-quinone oxidoreductase subunit K (105 aa).

Transmembrane regions (helical) follow at residues 9–29 (PNYY…GVLV), 34–54 (IVLF…LVTF), and 65–85 (IIAF…LAII).

This sequence belongs to the complex I subunit 4L family. As to quaternary structure, NDH-1 is composed of 14 different subunits. Subunits NuoA, H, J, K, L, M, N constitute the membrane sector of the complex.

It is found in the cell membrane. The enzyme catalyses a quinone + NADH + 5 H(+)(in) = a quinol + NAD(+) + 4 H(+)(out). Its function is as follows. NDH-1 shuttles electrons from NADH, via FMN and iron-sulfur (Fe-S) centers, to quinones in the respiratory chain. The immediate electron acceptor for the enzyme in this species is believed to be a menaquinone. Couples the redox reaction to proton translocation (for every two electrons transferred, four hydrogen ions are translocated across the cytoplasmic membrane), and thus conserves the redox energy in a proton gradient. The polypeptide is NADH-quinone oxidoreductase subunit K (Salinispora arenicola (strain CNS-205)).